The sequence spans 399 residues: Cell division protein DivIB (399 aa).

Disordered regions lie at residues 1-23 and 35-119; these read MSKD…SEWQ and EEEA…ATKE. At 1–133 the chain is on the cytoplasmic side; the sequence is MSKDKKNEDK…AKIPGIHILR (133 aa). Composition is skewed to basic and acidic residues over residues 35–65 and 75–119; these read EEEA…KQDQ and ESAK…ATKE. Residues 134-154 form a helical membrane-spanning segment; that stretch reads AFTILFPSLLLLFVSAYLLSP. Residues 155–399 lie on the Extracellular side of the membrane; it reads YATMKDIRVE…NQTTQRSSRR (245 aa). The POTRA domain occupies 156–226; it reads ATMKDIRVEG…TKFTIKVKEY (71 aa). Residues 364-388 show a composition bias toward basic and acidic residues; it reads KAKQEAKEAEKKQEEEQKKQEEESN. A disordered region spans residues 364 to 399; that stretch reads KAKQEAKEAEKKQEEEQKKQEEESNRNQTTQRSSRR. Residues 389 to 399 show a composition bias toward polar residues; sequence RNQTTQRSSRR.

This sequence belongs to the FtsQ/DivIB family. DivIB subfamily.

The protein resides in the cell membrane. In terms of biological role, cell division protein that may be involved in stabilizing or promoting the assembly of the division complex. This is Cell division protein DivIB from Streptococcus pneumoniae serotype 4 (strain ATCC BAA-334 / TIGR4).